The chain runs to 113 residues: MRSLLLAVCLVLALHCGEAAVSCNTVIADLYPCLSYVTQGGPVPTLCCNGLTTLKSQAQTSVDRQGVCRCIKSAIGGLTLSPRTIQNALELPSKCGVDLPYKFSPSTDCDSIQ.

The first 19 residues, 1 to 19, serve as a signal peptide directing secretion; it reads MRSLLLAVCLVLALHCGEA. 4 disulfides stabilise this stretch: C23/C70, C33/C47, C48/C95, and C68/C109.

Belongs to the plant LTP family.

Plant non-specific lipid-transfer proteins transfer phospholipids as well as galactolipids across membranes. May play a role in wax or cutin deposition in the cell walls of expanding epidermal cells and certain secretory tissues. The chain is Non-specific lipid-transfer protein 6 (LTP6) from Arabidopsis thaliana (Mouse-ear cress).